The primary structure comprises 540 residues: Membrane protein insertase YidC (540 aa).

A helical transmembrane segment spans residues 6-26 (NILLIALALVSFLLFQQWQVA). The segment covering 36-47 (QAQSSSSLPAPS) has biased composition (low complexity). A disordered region spans residues 36 to 63 (QAQSSSSLPAPSFADELDPVPGQQQASA). 4 helical membrane passes run 342–362 (AFIQ…TFIV), 417–437 (LGGC…YWAL), 455–475 (LSAQ…MFLI), and 496–516 (PVMF…YWLV).

It belongs to the OXA1/ALB3/YidC family. Type 1 subfamily. As to quaternary structure, interacts with the Sec translocase complex via SecD. Specifically interacts with transmembrane segments of nascent integral membrane proteins during membrane integration.

The protein resides in the cell inner membrane. Functionally, required for the insertion and/or proper folding and/or complex formation of integral membrane proteins into the membrane. Involved in integration of membrane proteins that insert both dependently and independently of the Sec translocase complex, as well as at least some lipoproteins. Aids folding of multispanning membrane proteins. This Vibrio parahaemolyticus serotype O3:K6 (strain RIMD 2210633) protein is Membrane protein insertase YidC.